A 182-amino-acid chain; its full sequence is ADP-ribosylation factor-like protein 3 (182 aa).

Gly-2 carries N-myristoyl glycine lipidation. At Ser-5 the chain carries Phosphoserine. Residues 24-31, Thr-48, 67-71, Gly-70, 126-129, and 159-161 each bind GTP; these read GLDNAGKT, DIGGQ, NKQD, and SAL. Thr-31 and Thr-48 together coordinate Mg(2+).

The protein belongs to the small GTPase superfamily. Arf family. Found in a complex with ARL3, RP2 and UNC119 (or UNC119B); RP2 induces hydrolysis of GTP ARL3 in the complex, leading to the release of UNC119 (or UNC119B). Interacts with RP2; interaction is direct and stimulated with the activated GTP-bound form of ARL3. Interacts with SYS1. Interacts with ARL2BP; the GTP-bound form interacts with ARL2BP. Microtubule-associated protein. Does not interact with TBCC. Interacts with RP2. Interacts with PDE6D; the interaction occurs specifically with the GTP-bound form of ARL3. Interacts with GGA1; the interaction recruits PKD1:PKD2 complex to trans-Golgi network and is required for ciliary targeting of PKD1:PKD2 complex. Interacts with DNAAF9.

The protein resides in the golgi apparatus membrane. Its subcellular location is the cytoplasm. It localises to the cytoskeleton. The protein localises to the spindle. It is found in the nucleus. The protein resides in the microtubule organizing center. Its subcellular location is the centrosome. It localises to the cell projection. The protein localises to the cilium. In terms of biological role, small GTP-binding protein which cycles between an inactive GDP-bound and an active GTP-bound form, and the rate of cycling is regulated by guanine nucleotide exchange factors (GEF) and GTPase-activating proteins (GAP). Required for normal cytokinesis and cilia signaling. Requires assistance from GTPase-activating proteins (GAPs) like RP2 and PDE6D, in order to cycle between inactive GDP-bound and active GTP-bound forms. Required for targeting proteins to the cilium, including myristoylated NPHP3 and prenylated INPP5E. Targets NPHP3 to the ciliary membrane by releasing myristoylated NPHP3 from UNC119B cargo adapter into the cilium. Required for PKD1:PKD2 complex targeting from the trans-Golgi network to the cilium. This Bos taurus (Bovine) protein is ADP-ribosylation factor-like protein 3 (ARL3).